The following is a 630-amino-acid chain: Peptidyl-prolyl cis-trans isomerase cyp15 (630 aa).

Residues 1-46 (MPEDSNTNDNNKRPLEDNNAVDGESDDDIGPMLPPPPGEDAPRKKK) form a disordered region. WD repeat units follow at residues 70–108 (MHRDVLSQVAVTKKDFIITTSVDGHLKFWKKTASGIEFV), 113–152 (SHLSSIVDISISANHELLATISDDTTLKVYDITNFDMINM), 157–198 (YKPK…KPLH), 203–242 (MHSKPVHIIEFNSRFNCVVSVDAIGMIEYWSPEAPFALPD), and 258–301 (RKKK…REYD). Residues 475–629 (LGTSAIIRTT…DDIKIINIDI (155 aa)) form the PPIase cyclophilin-type domain.

The protein belongs to the cyclophilin-type PPIase family.

The enzyme catalyses [protein]-peptidylproline (omega=180) = [protein]-peptidylproline (omega=0). PPIases accelerate the folding of proteins. It catalyzes the cis-trans isomerization of proline imidic peptide bonds in oligopeptides. In Rhizopus delemar (strain RA 99-880 / ATCC MYA-4621 / FGSC 9543 / NRRL 43880) (Mucormycosis agent), this protein is Peptidyl-prolyl cis-trans isomerase cyp15 (cyp15).